The sequence spans 443 residues: D-inositol 3-phosphate glycosyltransferase (443 aa).

A 1D-myo-inositol 3-phosphate-binding site is contributed by His30. UDP-N-acetyl-alpha-D-glucosamine contacts are provided by residues 36–37 (QP) and Gly44. 1D-myo-inositol 3-phosphate-binding positions include 41 to 46 (DAGGMN), Lys99, Tyr132, Thr156, and Arg176. The UDP-N-acetyl-alpha-D-glucosamine site is built by Arg250, Lys255, and Arg316. The Mg(2+) site is built by Phe325, Arg326, and Cys328. 2 residues coordinate UDP-N-acetyl-alpha-D-glucosamine: Glu338 and Glu346. Thr352 serves as a coordination point for Mg(2+).

It belongs to the glycosyltransferase group 1 family. MshA subfamily. As to quaternary structure, homodimer.

The enzyme catalyses 1D-myo-inositol 3-phosphate + UDP-N-acetyl-alpha-D-glucosamine = 1D-myo-inositol 2-acetamido-2-deoxy-alpha-D-glucopyranoside 3-phosphate + UDP + H(+). Its function is as follows. Catalyzes the transfer of a N-acetyl-glucosamine moiety to 1D-myo-inositol 3-phosphate to produce 1D-myo-inositol 2-acetamido-2-deoxy-glucopyranoside 3-phosphate in the mycothiol biosynthesis pathway. The polypeptide is D-inositol 3-phosphate glycosyltransferase (Stackebrandtia nassauensis (strain DSM 44728 / CIP 108903 / NRRL B-16338 / NBRC 102104 / LLR-40K-21)).